We begin with the raw amino-acid sequence, 38 residues long: Large ribosomal subunit protein bL36 (38 aa).

Belongs to the bacterial ribosomal protein bL36 family.

The sequence is that of Large ribosomal subunit protein bL36 from Chloroflexus aurantiacus (strain ATCC 29366 / DSM 635 / J-10-fl).